A 250-amino-acid polypeptide reads, in one-letter code: Pre-protein VI (250 aa).

Residues Met-1–Gly-33 constitute a propeptide that is removed on maturation. The segment at Ala-34–Tyr-54 is amphipathic alpha-helix essential for membrane lytic activity. The segment at Ser-36–Asn-53 is involved in endosomal membrane lysis. The interval Gly-48–Gln-74 is interaction with hexon protein. Positions Leu-67–Phe-76 match the Nuclear export signal motif. The segment at Ile-103 to Glu-147 is disordered. Ser-124 carries the phosphoserine; by host modification. Positions Gly-127 to Thr-140 are enriched in basic and acidic residues. The short motif at Lys-131 to Pro-135 is the Nuclear localization signal element. A Phosphothreonine; by host modification is found at Thr-143. The short motif at Pro-148 to Tyr-151 is the PPXY motif element. Positions Pro-206–Ser-220 are enriched in low complexity. The disordered stretch occupies residues Pro-206–Ser-226. The Nuclear export signal motif lies at Ser-231–Gln-242. The segment at Leu-233 to Leu-239 is interaction with hexon protein. Residues Gly-240–Phe-250 form a binds to importin alpha/beta, involved in hexon nuclear import region. A Nuclear localization signal motif is present at residues Lys-245–Arg-248.

Belongs to the adenoviridae protein VI family. In terms of assembly, interacts with hexon protein; this interaction allows nuclear import of hexon trimers and possibly pre-capsid assembly. Interacts (via C-terminal NLS) with importin alpha/beta. As to quaternary structure, interacts (via PPxY motif) with host NEDD4 ubiquitine ligase; this interaction might play a role in virus intracellular transport during entry. Part of a complex composed of the core-capsid bridging protein, the endosome lysis protein VI and the hexon-linking protein VIII; these interactions bridge the virus core to the capsid. Interacts with peripentonal hexons; this interaction stabilizes the capsid by gluing two peripentonal hexons together and joining them with an adjacent group-of-nine hexon. Heterodimer with the viral protease; disulfide-linked. Interacts with the viral protease. Ubiquitinated by Nedd4 following partial capsid disassembly; which might play a role in intracellular virus movement during entry. In terms of processing, contains the major nuclear import and export signals. Proteolytically removed during virion maturation. The processing of the C-terminus turns the precursor into a mature viral structural protein and abrogates its ability to promote hexon import and act as a potential chaperone protein.

Its subcellular location is the host nucleus. It is found in the host cytoplasm. The protein resides in the virion. During virus assembly, promotes hexon trimers nuclear import through nuclear pore complexes via an importin alpha/beta-dependent mechanism. By analogy to herpesviruses capsid assembly, might act as a chaperone to promote the formation of the icosahedral capsid. In terms of biological role, structural component of the virion that provides increased stability to the particle shell through its interaction with the core-capsid bridging protein and the hexon-linking protein VIII. Fibers shedding during virus entry into host cell allows the endosome lysis protein to be exposed as a membrane-lytic peptide. Exhibits pH-independent membrane fragmentation activity and probably mediates viral rapid escape from host endosome via organellar membrane lysis. It is not clear if it then remains partially associated with the capsid and involved in the intracellular microtubule-dependent transport of capsid to the nucleus, or if it is lost during endosomal penetration. Its function is as follows. Cofactor that activates the viral protease. Binds to viral protease in a 1:1 ratio. The chain is Pre-protein VI from Human adenovirus C serotype 2 (HAdV-2).